Here is a 194-residue protein sequence, read N- to C-terminus: Imidazoleglycerol-phosphate dehydratase (194 aa).

Belongs to the imidazoleglycerol-phosphate dehydratase family.

The protein localises to the cytoplasm. The catalysed reaction is D-erythro-1-(imidazol-4-yl)glycerol 3-phosphate = 3-(imidazol-4-yl)-2-oxopropyl phosphate + H2O. Its pathway is amino-acid biosynthesis; L-histidine biosynthesis; L-histidine from 5-phospho-alpha-D-ribose 1-diphosphate: step 6/9. This chain is Imidazoleglycerol-phosphate dehydratase, found in Chloroherpeton thalassium (strain ATCC 35110 / GB-78).